The primary structure comprises 316 residues: Transaldolase (316 aa).

The Schiff-base intermediate with substrate role is filled by lysine 125.

Belongs to the transaldolase family. Type 1 subfamily. Homodimer.

The protein resides in the cytoplasm. The catalysed reaction is D-sedoheptulose 7-phosphate + D-glyceraldehyde 3-phosphate = D-erythrose 4-phosphate + beta-D-fructose 6-phosphate. Its pathway is carbohydrate degradation; pentose phosphate pathway; D-glyceraldehyde 3-phosphate and beta-D-fructose 6-phosphate from D-ribose 5-phosphate and D-xylulose 5-phosphate (non-oxidative stage): step 2/3. Its function is as follows. Transaldolase is important for the balance of metabolites in the pentose-phosphate pathway. This is Transaldolase from Verminephrobacter eiseniae (strain EF01-2).